A 433-amino-acid polypeptide reads, in one-letter code: Divalent metal cation transporter MntH (433 aa).

A run of 11 helical transmembrane segments spans residues 32–52 (LIFA…GNFA), 62–82 (GYDL…FQGL), 101–121 (TLPP…AMAT), 131–151 (IGIA…TGIV), 168–188 (LVIG…LLIV), 209–229 (ALTI…LFLH), 256–276 (VLAA…MAAG), 296–316 (SPLL…ASGV), 345–365 (ALTM…TRAL), 366–386 (VLSQ…LLWF), and 401–421 (ITAI…VILL).

The protein belongs to the NRAMP family.

Its subcellular location is the cell inner membrane. In terms of biological role, h(+)-stimulated, divalent metal cation uptake system. The polypeptide is Divalent metal cation transporter MntH (Acidiphilium cryptum (strain JF-5)).